A 383-amino-acid polypeptide reads, in one-letter code: Chitinase-3-like protein 1 (383 aa).

Positions 1–21 (MGLRAAHTGFVVLVLLQSCAA) are cleaved as a signal peptide. The 362-residue stretch at 22–383 (YKLICYYTSW…SAIKDVLARV (362 aa)) folds into the GH18 domain. A disulfide bond links Cys-26 and Cys-51. N-linked (GlcNAc...) asparagine glycosylation is present at Asn-60. Chitin contacts are provided by residues 70–71 (EW), 97–100 (GGWN), Tyr-141, 204–207 (LTYD), and Arg-263. Cys-300 and Cys-364 form a disulfide bridge. Residues 324–338 (QWVAYDDQESVKNKA) are important for AKT1 activation and IL8 production. A chitin-binding site is contributed by Trp-352. A glycan (N-linked (GlcNAc...) asparagine) is linked at Asn-367.

Belongs to the glycosyl hydrolase 18 family. Monomer. Glycosylated. As to expression, mammary secretions collected during the non-lactating period.

Its subcellular location is the secreted. It localises to the extracellular space. The protein resides in the cytoplasm. The protein localises to the perinuclear region. It is found in the endoplasmic reticulum. Functionally, carbohydrate-binding lectin with a preference for chitin. Has no chitinase activity. May play a role in tissue remodeling and in the capacity of cells to respond to and cope with changes in their environment. Plays a role in T-helper cell type 2 (Th2) inflammatory response and IL-13-induced inflammation, regulating allergen sensitization, inflammatory cell apoptosis, dendritic cell accumulation and M2 macrophage differentiation. Facilitates invasion of pathogenic enteric bacteria into colonic mucosa and lymphoid organs. Mediates activation of AKT1 signaling pathway and subsequent IL8 production in colonic epithelial cells. Regulates antibacterial responses in lung by contributing to macrophage bacterial killing, controlling bacterial dissemination and augmenting host tolerance. Also regulates hyperoxia-induced injury, inflammation and epithelial apoptosis in lung. The sequence is that of Chitinase-3-like protein 1 (CHI3L1) from Bos taurus (Bovine).